Here is a 307-residue protein sequence, read N- to C-terminus: Pseudouridine-5'-phosphate glycosidase (307 aa).

Glu-26 serves as the catalytic Proton donor. Substrate is bound by residues Lys-88 and Val-108. Asp-140 contacts Mn(2+). Residue 142 to 144 (SAD) participates in substrate binding. The Nucleophile role is filled by Lys-161.

It belongs to the pseudouridine-5'-phosphate glycosidase family. In terms of assembly, homotrimer. It depends on Mn(2+) as a cofactor.

The catalysed reaction is D-ribose 5-phosphate + uracil = psi-UMP + H2O. Catalyzes the reversible cleavage of pseudouridine 5'-phosphate (PsiMP) to ribose 5-phosphate and uracil. Functions biologically in the cleavage direction, as part of a pseudouridine degradation pathway. The chain is Pseudouridine-5'-phosphate glycosidase from Clostridium botulinum (strain Langeland / NCTC 10281 / Type F).